The primary structure comprises 320 residues: Mas-related G-protein coupled receptor member D (320 aa).

Over 1-33 the chain is Extracellular; sequence MNQTLNSSGTAELALNHSRGSVVHAACLVLSSL. Asparagine 2, asparagine 6, and asparagine 16 each carry an N-linked (GlcNAc...) asparagine glycan. Residues 34-54 traverse the membrane as a helical segment; the sequence is AMFTCLCGMAGNSMVIWLLGF. Over 55 to 62 the chain is Cytoplasmic; that stretch reads RMRRTPFS. Residues 63 to 83 traverse the membrane as a helical segment; that stretch reads IYILNLAAADLLFVFCMAAML. At 84–112 the chain is on the extracellular side; the sequence is SLETQPLVSTTDKVHELMKRLKYFAYTVG. The helical transmembrane segment at 113-133 threads the bilayer; that stretch reads LSLLTAISTQRCLSVLFPIWF. The Cytoplasmic segment spans residues 134 to 142; that stretch reads KCHRPRHLS. Residues 143–163 form a helical membrane-spanning segment; sequence AWVCALLWMLCLLTNGLTSCF. Residues 164–182 lie on the Extracellular side of the membrane; sequence CSKFLKFNKDQCFRVDMVQ. The helical transmembrane segment at 183–203 threads the bilayer; the sequence is AALIMGVLTPVMTLSSLTLFV. Residues 204 to 218 lie on the Cytoplasmic side of the membrane; that stretch reads RVRRSSQQWRRQPTR. A helical membrane pass occupies residues 219–239; that stretch reads LFVVVLASVLVFLICSLPLGF. The Extracellular segment spans residues 240 to 257; sequence YWFVLYWLNLPPDTKVLY. The chain crosses the membrane as a helical span at residues 258-280; sequence FNLSRLSSSMSSSANPLIYFLVG. Residues 281 to 320 are Cytoplasmic-facing; that stretch reads SRRSRRLQGSLGTVLQRALREEPELEGGETPTTGTNEMGA. Residues 301–320 are disordered; sequence EEPELEGGETPTTGTNEMGA. A compositionally biased stretch (low complexity) spans 308-320; that stretch reads GETPTTGTNEMGA.

The protein belongs to the G-protein coupled receptor 1 family. Mas subfamily. In terms of tissue distribution, co-expressed in the small diameter neurons with P2X3 and VR1 in dorsal root ganglia.

It is found in the cell membrane. May regulate nociceptor function and/or development, including the sensation or modulation of pain. Functions as a specific membrane receptor for beta-alanine. The receptor couples with G-protein G(q) and G(i). In Macaca fascicularis (Crab-eating macaque), this protein is Mas-related G-protein coupled receptor member D (MRGPRD).